A 41-amino-acid polypeptide reads, in one-letter code: Photosystem I reaction center subunit IX (41 aa).

The chain crosses the membrane as a helical span at residues 7 to 27 (YLSTAPVLATLWFGLLAGILI).

This sequence belongs to the PsaJ family.

Its subcellular location is the plastid. It is found in the chloroplast thylakoid membrane. May help in the organization of the PsaE and PsaF subunits. The chain is Photosystem I reaction center subunit IX from Chara vulgaris (Common stonewort).